The sequence spans 1391 residues: MKRGFARPTPEKPPVIKPENIVLSTPLSIPPPEGKPWWLIVVGVVVVGLLGGMVAMVFASGSHVFGGIGSIFPLFMMVGIMMMMFRGMGGGQQQMSRPKLDAMRAQFMLMLDMLRETAQESADSMDANYRWFHPAPNTLAAAVGSPRMWERKPDGKDLNFGVVRVGVGMTRPEVTWGEPQNMPTDIELEPVTGKALQEFGRYQSVVYNLPKMVSLLVEPWYALVGEREQVLGLMRAIICQLAFSHGPDHVQMIVVSSDLDQWDWVKWLPHFGDSRRHDAAGNARMVYTSVREFAAEQAELFAGRGSFTPRHASSSAQTPTPHTVIIADVDDPQWEYVISAEGVDGVTFFDLTGSSMWTDIPERKLQFDKTGVIEALPRDRDTWMVIDDKAWFFALTDQVSIAEAEEFAQKLAQWRLAEAYEEIGQRVAHIGARDILSYYGIDDPGNIDFDSLWASRTDTMGRSRLRAPFGNRSDNGELLFLDMKSLDEGGDGPHGVMSGTTGSGKSTLVRTVIESLMLSHPPEELQFVLADLKGGSAVKPFAGVPHVSRIITDLEEDQALMERFLDALWGEIARRKAICDSAGVDDAKEYNSVRARMRARGQDMAPLPMLVVVIDEFYEWFRIMPTAVDVLDSIGRQGRAYWIHLMMASQTIESRAEKLMENMGYRLVLKARTAGAAQAAGVPNAVNLPAQAGLGYFRKSLEDIIRFQAEFLWRDYFQPGVSIDGEEAPALVHSIDYIRPQLFTNSFTPLEVSVGGPDIEPVVAQPNGEVLESDDIEGGEDEDEEGVRTPKVGTVIIDQLRKIKFEPYRLWQPPLTQPVAIDDLVNRFLGRPWHKEYGSACNLVFPIGIIDRPYKHDQPPWTVDTSGPGANVLILGAGGSGKTTALQTLICSAALTHTPQQVQFYCLAYSSTALTTVSRIPHVGEVAGPTDPYGVRRTVAELLALVRERKRSFLECGIASMEMFRRRKFGGEAGPVPDDGFGDVYLVIDNYRALAEENEVLIEQVNVIINQGPSFGVHVVVTADRESELRPPVRSGFGSRIELRLAAVEDAKLVRSRFAKDVPVKPGRGMVAVNYVRLDSDPQAGLHTLVARPALGSTPDNVFECDSVVAAVSRLTSAQAPPVRRLPARFGVEQVRELASRDTRQGVGAGGIAWAISELDLAPVYLNFAENSHLMVTGRRECGRTTTLATIMSEIGRLYAPGASSAPPPAPGRPSAQVWLVDPRRQLLTALGSDYVERFAYNLDGVVAMMGELAAALAGREPPPGLSAEELLSRSWWSGPEIFLIVDDIQQLPPGFDSPLHKAVPFVNRAADVGLHVIVTRTFGGWSSAGSDPMLRALHQANAPLLVMDADPDEGFIRGKMKGGPLPRGRGLLMAEDTGVFVQVAATEVRR.

Helical transmembrane passes span 38–58 (WLIVVGVVVVGLLGGMVAMVF) and 65–85 (FGGIGSIFPLFMMVGIMMMMF). FtsK domains lie at 476–678 (GELL…GAAQ), 858–1052 (QPPW…EDAK), and 1161–1354 (LAPV…DPDE). ATP contacts are provided by residues 499 to 506 (GTTGSGKS), 876 to 883 (GAGGSGKT), and 1178 to 1185 (GRRECGRT).

As to quaternary structure, part of the ESX-5 / type VII secretion system (T7SS), which is composed of cytosolic and membrane components. The ESX-5 membrane complex is composed of EccB5, EccC5, EccD5 and EccE5.

The protein localises to the cell inner membrane. Part of the ESX-5 specialized secretion system, which is responsible for the secretion of EsxN and a number of PE_PGRS and PPE proteins, including PPE41. The sequence is that of ESX-5 secretion system protein EccC5 from Mycobacterium tuberculosis (strain CDC 1551 / Oshkosh).